The primary structure comprises 933 residues: Neuronal PAS domain-containing protein 4A (933 aa).

Residues 1–13 (MYRSTKGASKARR) form a basic motif; degenerate region. The bHLH domain maps to 1–53 (MYRSTKGASKARRDQINAEIRNLKDLLPISDADKSRLSYLHIMSLACMYTRKS). The tract at residues 14–53 (DQINAEIRNLKDLLPISDADKSRLSYLHIMSLACMYTRKS) is helix-loop-helix motif. PAS domains lie at 74 to 148 (SFYE…PDTD) and 220 to 290 (TSAS…LREG). Positions 295–334 (AEMVVRVETADHSWVWLYMVLQLETGETPIVSNNYIISET) constitute a PAC domain. Over residues 361–398 (QESVSLQSPETLSSPDQVFTPGSSGLSGQSFDFSTAAC) the composition is skewed to polar residues. Disordered stretches follow at residues 361–451 (QESV…ASSP), 514–573 (GSNF…LSSL), and 750–776 (DLSSSPPLSPTPSSSSHSSPPSSPSTP). Composition is skewed to low complexity over residues 399 to 411 (STGSTEEQGGSSS), 440 to 451 (EPMASPSSASSP), 538 to 560 (GQTATVTTTTAPSLSPSAPSNPQ), and 751 to 769 (LSSSPPLSPTPSSSSHSSP).

Efficient DNA binding requires dimerization with another bHLH protein. Brain-specific.

It is found in the nucleus. In terms of biological role, transcription factor expressed in neurons of the brain that regulates the excitatory-inhibitory balance within neural circuits and is required for contextual memory in the hippocampus. Plays a key role in the structural and functional plasticity of neurons. Acts as an early-response transcription factor in both excitatory and inhibitory neurons, where it induces distinct but overlapping sets of late-response genes in these two types of neurons, allowing the synapses that form on inhibitory and excitatory neurons to be modified by neuronal activity in a manner specific to their function within a circuit, thereby facilitating appropriate circuit responses to sensory experience. The protein is Neuronal PAS domain-containing protein 4A (npas4a) of Danio rerio (Zebrafish).